A 501-amino-acid polypeptide reads, in one-letter code: Aldehyde dehydrogenase 1A1 (501 aa).

Ser-2 carries the N-acetylserine modification. Lys-91 and Lys-128 each carry N6-acetyllysine. Residues 167–170 (IPWN), 193–196 (KPAE), 226–227 (GP), and 246–247 (GS) contribute to the NAD(+) site. Lys-252 carries the post-translational modification N6-acetyllysine. The active-site Proton acceptor is the Glu-269. Residue 269–271 (ELG) participates in NAD(+) binding. The active-site Nucleophile is Cys-303. The segment at 336-501 (LTPGINQGPQ…VAMKISQKNS (166 aa)) is mediates interaction with PRMT3. Residue Thr-337 is modified to Phosphothreonine. 349 to 353 (EQHDK) is an NAD(+) binding site. N6-acetyllysine occurs at positions 353 and 367. NAD(+) is bound at residue 400-402 (EIF). Residue Lys-410 is modified to N6-acetyllysine. Ser-413 is subject to Phosphoserine. Residues Lys-419, Lys-435, and Lys-495 each carry the N6-acetyllysine modification.

This sequence belongs to the aldehyde dehydrogenase family. In terms of assembly, homotetramer. Interacts with PRMT3; the interaction is direct, inhibits ALDH1A1 aldehyde dehydrogenase activity and is independent of the methyltransferase activity of PRMT3. Post-translationally, the N-terminus is blocked most probably by acetylation. In terms of tissue distribution, expressed in retina. Expressed in lens and cornea (at protein level). Expressed by midbrain dopamine neurons.

It is found in the cytoplasm. The protein localises to the cytosol. It localises to the cell projection. Its subcellular location is the axon. The catalysed reaction is an aldehyde + NAD(+) + H2O = a carboxylate + NADH + 2 H(+). It carries out the reaction all-trans-retinal + NAD(+) + H2O = all-trans-retinoate + NADH + 2 H(+). The enzyme catalyses 9-cis-retinal + NAD(+) + H2O = 9-cis-retinoate + NADH + 2 H(+). It catalyses the reaction 11-cis-retinal + NAD(+) + H2O = 11-cis-retinoate + NADH + 2 H(+). The catalysed reaction is 13-cis-retinal + NAD(+) + H2O = 13-cis-retinoate + NADH + 2 H(+). It carries out the reaction 4-aminobutanal + NAD(+) + H2O = 4-aminobutanoate + NADH + 2 H(+). The enzyme catalyses 3-deoxyglucosone + NAD(+) + H2O = 2-dehydro-3-deoxy-D-gluconate + NADH + 2 H(+). It catalyses the reaction (E)-4-hydroxynon-2-enal + NAD(+) + H2O = (E)-4-hydroxynon-2-enoate + NADH + 2 H(+). The catalysed reaction is malonaldehyde + NAD(+) + H2O = 3-oxopropanoate + NADH + 2 H(+). It carries out the reaction hexanal + NAD(+) + H2O = hexanoate + NADH + 2 H(+). The enzyme catalyses propanal + NAD(+) + H2O = propanoate + NADH + 2 H(+). It catalyses the reaction acetaldehyde + NAD(+) + H2O = acetate + NADH + 2 H(+). The catalysed reaction is benzaldehyde + NAD(+) + H2O = benzoate + NADH + 2 H(+). The protein operates within cofactor metabolism; retinol metabolism. With respect to regulation, the aminobutyraldehyde dehydrogenase activity is negatively regulated by ethanol in vivo. Functionally, cytosolic dehydrogenase that catalyzes the irreversible oxidation of a wide range of aldehydes to their corresponding carboxylic acid. Functions downstream of retinol dehydrogenases and catalyzes the oxidation of retinaldehyde into retinoic acid, the second step in the oxidation of retinol/vitamin A into retinoic acid. This pathway is crucial to control the levels of retinol and retinoic acid, two important molecules which excess can be teratogenic and cytotoxic. Also oxidizes aldehydes resulting from lipid peroxidation like (E)-4-hydroxynon-2-enal/HNE, malonaldehyde and hexanal that form protein adducts and are highly cytotoxic. By participating for instance to the clearance of (E)-4-hydroxynon-2-enal/HNE in the lens epithelium prevents the formation of HNE-protein adducts and lens opacification. Also functions downstream of fructosamine-3-kinase in the fructosamine degradation pathway by catalyzing the oxidation of 3-deoxyglucosone, the carbohydrate product of fructosamine 3-phosphate decomposition, which is itself a potent glycating agent that may react with lysine and arginine side-chains of proteins. Also has an aminobutyraldehyde dehydrogenase activity and is probably part of an alternative pathway for the biosynthesis of GABA/4-aminobutanoate in midbrain, thereby playing a role in GABAergic synaptic transmission. The chain is Aldehyde dehydrogenase 1A1 from Mus musculus (Mouse).